The chain runs to 227 residues: Lipoprotein-releasing system ATP-binding protein LolD (227 aa).

The 221-residue stretch at 7 to 227 (LQLTGVERHY…TISDGKIVDF (221 aa)) folds into the ABC transporter domain. 43–50 (APSGTGKS) is a binding site for ATP.

This sequence belongs to the ABC transporter superfamily. Lipoprotein translocase (TC 3.A.1.125) family. As to quaternary structure, the complex is composed of two ATP-binding proteins (LolD) and two transmembrane proteins (LolC and LolE).

It localises to the cell inner membrane. Functionally, part of the ABC transporter complex LolCDE involved in the translocation of mature outer membrane-directed lipoproteins, from the inner membrane to the periplasmic chaperone, LolA. Responsible for the formation of the LolA-lipoprotein complex in an ATP-dependent manner. This Rhizobium johnstonii (strain DSM 114642 / LMG 32736 / 3841) (Rhizobium leguminosarum bv. viciae) protein is Lipoprotein-releasing system ATP-binding protein LolD.